Reading from the N-terminus, the 504-residue chain is Maturase K (504 aa).

It belongs to the intron maturase 2 family. MatK subfamily.

It is found in the plastid. The protein resides in the chloroplast. Functionally, usually encoded in the trnK tRNA gene intron. Probably assists in splicing its own and other chloroplast group II introns. The chain is Maturase K from Fagus crenata (Japanese beech).